The sequence spans 544 residues: POTE ankyrin domain family member B2 (544 aa).

5 ANK repeats span residues 135 to 167 (QKRT…VLDN), 168 to 200 (KKRT…IQDE), 201 to 233 (YGNT…SKNK), 234 to 266 (CGLT…ALDR), and 267 to 299 (YGRT…SQDL). Residues 332–457 (SSENSNPEQD…NTGISQDEIL (126 aa)) are disordered. Composition is skewed to basic and acidic residues over residues 340–355 (QDLK…RLKV) and 364–375 (MSQEPEINKDCD). The segment covering 439–457 (TQKQLSEEQNTGISQDEIL) has biased composition (polar residues).

This sequence belongs to the POTE family.

In Homo sapiens (Human), this protein is POTE ankyrin domain family member B2 (POTEB2).